Here is a 328-residue protein sequence, read N- to C-terminus: Lipoyl synthase (328 aa).

Residues C75, C80, C86, C101, C105, C108, and S315 each coordinate [4Fe-4S] cluster. A Radical SAM core domain is found at F87–E304.

Belongs to the radical SAM superfamily. Lipoyl synthase family. [4Fe-4S] cluster is required as a cofactor.

Its subcellular location is the cytoplasm. The enzyme catalyses [[Fe-S] cluster scaffold protein carrying a second [4Fe-4S](2+) cluster] + N(6)-octanoyl-L-lysyl-[protein] + 2 oxidized [2Fe-2S]-[ferredoxin] + 2 S-adenosyl-L-methionine + 4 H(+) = [[Fe-S] cluster scaffold protein] + N(6)-[(R)-dihydrolipoyl]-L-lysyl-[protein] + 4 Fe(3+) + 2 hydrogen sulfide + 2 5'-deoxyadenosine + 2 L-methionine + 2 reduced [2Fe-2S]-[ferredoxin]. Its pathway is protein modification; protein lipoylation via endogenous pathway; protein N(6)-(lipoyl)lysine from octanoyl-[acyl-carrier-protein]: step 2/2. In terms of biological role, catalyzes the radical-mediated insertion of two sulfur atoms into the C-6 and C-8 positions of the octanoyl moiety bound to the lipoyl domains of lipoate-dependent enzymes, thereby converting the octanoylated domains into lipoylated derivatives. The sequence is that of Lipoyl synthase from Colwellia psychrerythraea (strain 34H / ATCC BAA-681) (Vibrio psychroerythus).